A 368-amino-acid chain; its full sequence is Putative zinc metalloprotease Cj1068 (368 aa).

His-36 provides a ligand contact to Zn(2+). The active site involves Glu-37. His-40 provides a ligand contact to Zn(2+). 3 consecutive transmembrane segments (helical) span residues 112 to 134, 291 to 313, and 338 to 360; these read IYIL…IIIG, FTLL…LLPI, and TFEY…ATYN. The PDZ domain occupies 126–197; sequence AFFLYIIIGN…LKILINREGK (72 aa).

The protein belongs to the peptidase M50B family. It depends on Zn(2+) as a cofactor.

Its subcellular location is the cell inner membrane. This chain is Putative zinc metalloprotease Cj1068, found in Campylobacter jejuni subsp. jejuni serotype O:2 (strain ATCC 700819 / NCTC 11168).